We begin with the raw amino-acid sequence, 469 residues long: Regulator of G-protein signaling 7 (469 aa).

In terms of domain architecture, DEP spans 37 to 112 (EKNGIPIRTV…DDGTFYRFQT (76 aa)). S229 and S241 each carry phosphoserine. A disordered region spans residues 235–256 (NDIRSHSPTHTPTPETKPPTED). T243 is modified (phosphothreonine). The region spanning 255 to 316 (EDELQQQIKY…LSDDTTFWEL (62 aa)) is the G protein gamma domain. The RGS domain occupies 333 to 448 (GMDEALKDPV…IRSSAYQELL (116 aa)). S434 is modified (phosphoserine).

Interacts with GNB5, forming the RGS7-GNB5 complex. Interacts with GPR158; promotes the GTPase activator activity of the RGS7-GNB5 complex in absence of glycine, in contrast GTPase activator activity of the RGS7-GNB5 complex is inhibited in presence of glycine. Interacts with GPR179. Interacts with PKD1; this prevents rapid proteasomal degradation. Interacts with RGS7BP, leading to regulate the subcellular location of the heterodimer formed with GNB5. Interacts (phosphorylated form) with 14-3-3 protein YWHAQ. Interacts with SNAPIN. Interacts with GNAI1. Interacts with GNAO1, GNAI3 and GNAZ. In terms of processing, palmitoylated. Post-translationally, ubiquitinated, leading to rapid proteasomal degradation. Phosphorylation and subsequent interaction with 14-3-3 proteins inhibits GAP activity. Detected in retina (at protein level).

Its subcellular location is the cytoplasm. It localises to the cytosol. The protein resides in the cell membrane. It is found in the membrane. Its function is as follows. GTPase activator component of the RGS7-GNB5 complex that regulates G protein-coupled receptor signaling cascades. The RGS7-GNB5 complex acts as an inhibitor signal transduction by promoting the GTPase activity of G protein alpha subunits, such as GNAO1, thereby driving them into their inactive GDP-bound form. May play a role in synaptic vesicle exocytosis. Glycine-dependent regulation of the RGS7-GNB5 complex by GPR158 affects mood and cognition via its ability to regulate neuronal excitability in L2/L3 pyramidal neurons of the prefrontal cortex. Modulates the activity of potassium channels that are activated by GNAO1 in response to muscarinic acetylcholine receptor M2/CHRM2 signaling. The protein is Regulator of G-protein signaling 7 (RGS7) of Bos taurus (Bovine).